The chain runs to 78 residues: Defensin-like protein 173 (78 aa).

The first 23 residues, 1-23 (MAKAPSPLVFPIIFLIIFALVEP), serve as a signal peptide directing secretion. Cystine bridges form between Cys27-Cys71, Cys34-Cys56, Cys40-Cys65, and Cys44-Cys67.

This sequence belongs to the DEFL family.

The protein resides in the secreted. The sequence is that of Defensin-like protein 173 (LCR63) from Arabidopsis thaliana (Mouse-ear cress).